A 233-amino-acid polypeptide reads, in one-letter code: Glycolipid transfer protein 3 (233 aa).

4 residues coordinate a ganglioside GM3 (d18:1(4E)): Asp-79, Asn-83, Trp-126, and His-165.

It belongs to the GLTP family.

May be involved in glycolipids transfer. The sequence is that of Glycolipid transfer protein 3 from Arabidopsis thaliana (Mouse-ear cress).